The following is a 334-amino-acid chain: Phosphate acyltransferase (334 aa).

The protein belongs to the PlsX family. Homodimer. Probably interacts with PlsY.

It is found in the cytoplasm. The catalysed reaction is a fatty acyl-[ACP] + phosphate = an acyl phosphate + holo-[ACP]. It participates in lipid metabolism; phospholipid metabolism. Its function is as follows. Catalyzes the reversible formation of acyl-phosphate (acyl-PO(4)) from acyl-[acyl-carrier-protein] (acyl-ACP). This enzyme utilizes acyl-ACP as fatty acyl donor, but not acyl-CoA. The polypeptide is Phosphate acyltransferase (Streptococcus thermophilus (strain ATCC BAA-491 / LMD-9)).